The sequence spans 193 residues: Xanthine phosphoribosyltransferase (193 aa).

Xanthine-binding residues include L20 and N27. A128 to A132 contacts 5-phospho-alpha-D-ribose 1-diphosphate. Residue K156 participates in xanthine binding.

It belongs to the purine/pyrimidine phosphoribosyltransferase family. Xpt subfamily. As to quaternary structure, homodimer.

The protein localises to the cytoplasm. It carries out the reaction XMP + diphosphate = xanthine + 5-phospho-alpha-D-ribose 1-diphosphate. Its pathway is purine metabolism; XMP biosynthesis via salvage pathway; XMP from xanthine: step 1/1. Functionally, converts the preformed base xanthine, a product of nucleic acid breakdown, to xanthosine 5'-monophosphate (XMP), so it can be reused for RNA or DNA synthesis. The sequence is that of Xanthine phosphoribosyltransferase from Staphylococcus saprophyticus subsp. saprophyticus (strain ATCC 15305 / DSM 20229 / NCIMB 8711 / NCTC 7292 / S-41).